The sequence spans 224 residues: UPF0758 protein PFLU_5982 (224 aa).

One can recognise an MPN domain in the interval 102–224 (VLESPKAVRD…PLSMAEYGWL (123 aa)). Zn(2+) is bound by residues His173, His175, and Asp186. Positions 173-186 (HNHPSGSLEPSAAD) match the JAMM motif motif.

Belongs to the UPF0758 family.

This chain is UPF0758 protein PFLU_5982, found in Pseudomonas fluorescens (strain SBW25).